A 167-amino-acid polypeptide reads, in one-letter code: 6,7-dimethyl-8-ribityllumazine synthase (167 aa).

Residues Phe26, 60–62 (AFE), and 89–91 (AVI) each bind 5-amino-6-(D-ribitylamino)uracil. Residue 94-95 (ET) participates in (2S)-2-hydroxy-3-oxobutyl phosphate binding. His97 acts as the Proton donor in catalysis. Phe122 is a 5-amino-6-(D-ribitylamino)uracil binding site. Arg136 contributes to the (2S)-2-hydroxy-3-oxobutyl phosphate binding site.

This sequence belongs to the DMRL synthase family. Forms an icosahedral capsid composed of 60 subunits, arranged as a dodecamer of pentamers.

The enzyme catalyses (2S)-2-hydroxy-3-oxobutyl phosphate + 5-amino-6-(D-ribitylamino)uracil = 6,7-dimethyl-8-(1-D-ribityl)lumazine + phosphate + 2 H2O + H(+). It participates in cofactor biosynthesis; riboflavin biosynthesis; riboflavin from 2-hydroxy-3-oxobutyl phosphate and 5-amino-6-(D-ribitylamino)uracil: step 1/2. Functionally, catalyzes the formation of 6,7-dimethyl-8-ribityllumazine by condensation of 5-amino-6-(D-ribitylamino)uracil with 3,4-dihydroxy-2-butanone 4-phosphate. This is the penultimate step in the biosynthesis of riboflavin. In Vesicomyosocius okutanii subsp. Calyptogena okutanii (strain HA), this protein is 6,7-dimethyl-8-ribityllumazine synthase.